We begin with the raw amino-acid sequence, 793 residues long: MDLEFGRGMRSPQRDSWKTTLLLAYQSLGVVYGDLSISPLYVFKSTFAEDIQHSETNEEIFGVLSFVFWTLTLIPLIKYVSIVLRADDNGEGGTFALYSLICRHANVSLLPNRQIADEELSTYKLECSSERTDKSCIKVWLEKHKKLHTALLIMVLIGTCMVIGDGVLTPAISVFSAVSGLEFSLSKDHREYAVIPITCVILAFLFALQHYGTHRVGFLFAPIVLAWLICMSALGLYNIIHWNPHVYQALNPCYMFKFLKKTRKYGWMSLGGILLCMTGSEAMFADLGHFSYSAIQLAFTSLVYPALILAYMGQAAYLSKHHDFYSNSQVGFYIAVPDKVRWPVLVLAILASVVGSQAIISGTFSIINQSQSLSCFPRVKVVHTSDKIHGQIYIPEINWLLMILCIAVTVGFRDTKHMGNASGLAVITVMLVTTCLTSLVIMLCWRRPPVLALCFLLFFGSVEALYFSASLIKFLEGAWLPILLALFLMAVMLVWHYTTIKKYEFDLHNKVTLEWLLALGDKLGMVRVPGIGLVYTDLTSGVPANFSRFVTNLPAFHQVLVFVCVKSVPVPYVFPAERYLIGRVGPPGHRSYRCIVRYGYRDVHQDVDSFETELVESLATFIKLDASYRCSDASGGGGDHEPEEERGTRLAVIGSSHASYDIQDSVQHSSAASVETTTTRRRSGGGDDDGSPGGGGGRAKQVRFFIDSHVASPEAADNKQVAEELEALAAARDAGTAFILGHSHVQCKPGSSLLKRLAVDVGYNFLRRNCRGPDVALRVPPASLLEVGMVYVL.

The Cytoplasmic portion of the chain corresponds to 1 to 22; sequence MDLEFGRGMRSPQRDSWKTTLL. Residues 23–43 form a helical membrane-spanning segment; it reads LAYQSLGVVYGDLSISPLYVF. Topologically, residues 44-59 are extracellular; the sequence is KSTFAEDIQHSETNEE. Residues 60 to 80 traverse the membrane as a helical segment; it reads IFGVLSFVFWTLTLIPLIKYV. Residues 81–151 are Cytoplasmic-facing; sequence SIVLRADDNG…EKHKKLHTAL (71 aa). A helical transmembrane segment spans residues 152–172; that stretch reads LIMVLIGTCMVIGDGVLTPAI. Topologically, residues 173 to 191 are extracellular; sequence SVFSAVSGLEFSLSKDHRE. The helical transmembrane segment at 192–212 threads the bilayer; that stretch reads YAVIPITCVILAFLFALQHYG. Residues 213–215 are Cytoplasmic-facing; that stretch reads THR. Residues 216-236 form a helical membrane-spanning segment; it reads VGFLFAPIVLAWLICMSALGL. Over 237-264 the chain is Extracellular; the sequence is YNIIHWNPHVYQALNPCYMFKFLKKTRK. A helical transmembrane segment spans residues 265–285; sequence YGWMSLGGILLCMTGSEAMFA. Topologically, residues 286–292 are cytoplasmic; sequence DLGHFSY. Residues 293–313 traverse the membrane as a helical segment; the sequence is SAIQLAFTSLVYPALILAYMG. The Extracellular segment spans residues 314-343; the sequence is QAAYLSKHHDFYSNSQVGFYIAVPDKVRWP. Residues 344–364 traverse the membrane as a helical segment; it reads VLVLAILASVVGSQAIISGTF. Over 365–391 the chain is Cytoplasmic; the sequence is SIINQSQSLSCFPRVKVVHTSDKIHGQ. The helical transmembrane segment at 392-412 threads the bilayer; the sequence is IYIPEINWLLMILCIAVTVGF. The Extracellular portion of the chain corresponds to 413-422; the sequence is RDTKHMGNAS. Asparagine 420 carries N-linked (GlcNAc...) asparagine glycosylation. The helical transmembrane segment at 423 to 443 threads the bilayer; it reads GLAVITVMLVTTCLTSLVIML. Over 444–448 the chain is Cytoplasmic; that stretch reads CWRRP. A helical transmembrane segment spans residues 449–469; that stretch reads PVLALCFLLFFGSVEALYFSA. The Extracellular segment spans residues 470-473; that stretch reads SLIK. The chain crosses the membrane as a helical span at residues 474–494; the sequence is FLEGAWLPILLALFLMAVMLV. Over 495 to 793 the chain is Cytoplasmic; it reads WHYTTIKKYE…LLEVGMVYVL (299 aa). Residues 664 to 675 are compositionally biased toward polar residues; it reads DSVQHSSAASVE. The segment at 664–698 is disordered; sequence DSVQHSSAASVETTTTRRRSGGGDDDGSPGGGGGR.

This sequence belongs to the HAK/KUP transporter (TC 2.A.72.3) family.

The protein localises to the membrane. In terms of biological role, high-affinity potassium transporter. The polypeptide is Putative potassium transporter 8 (HAK8) (Oryza sativa subsp. japonica (Rice)).